A 253-amino-acid polypeptide reads, in one-letter code: Glucosamine-6-phosphate deaminase (253 aa).

Aspartate 65 acts as the Proton acceptor; for enolization step in catalysis. The For ring-opening step role is filled by asparagine 133. Histidine 135 acts as the Proton acceptor; for ring-opening step in catalysis. Glutamate 140 functions as the For ring-opening step in the catalytic mechanism.

The protein belongs to the glucosamine/galactosamine-6-phosphate isomerase family. NagB subfamily.

It catalyses the reaction alpha-D-glucosamine 6-phosphate + H2O = beta-D-fructose 6-phosphate + NH4(+). Its pathway is amino-sugar metabolism; N-acetylneuraminate degradation; D-fructose 6-phosphate from N-acetylneuraminate: step 5/5. Its function is as follows. Catalyzes the reversible isomerization-deamination of glucosamine 6-phosphate (GlcN6P) to form fructose 6-phosphate (Fru6P) and ammonium ion. This is Glucosamine-6-phosphate deaminase from Corynebacterium glutamicum (strain R).